Consider the following 164-residue polypeptide: Putative protein ZNF321 (164 aa).

The sequence is that of Putative protein ZNF321 (ZNF321P) from Homo sapiens (Human).